A 438-amino-acid chain; its full sequence is DNA primase small subunit (438 aa).

Active-site residues include E63, D127, and D129. The Zinc knuckle motif motif lies at 139-149 (CCSGAGVCLKC).

This sequence belongs to the eukaryotic-type primase small subunit family. As to quaternary structure, heterodimer of a catalytic subunit Prim1 and a regulatory subunit Prim2, also known as the DNA primase complex. Component of the alpha DNA polymerase complex (also known as the alpha DNA polymerase-primase complex) consisting of four subunits: the catalytic subunit PolA1, the regulatory subunit PolA2, and the primase complex subunits Prim1 and Prim2 respectively. PolA1 associates with the DNA primase complex before association with PolA2. Requires Mg(2+) as cofactor. Mn(2+) serves as cofactor. Expressed in embryos (at protein level).

The presence of the regulatory subunit Prim2 accelerates the kinetics of initiation and primer extension. Its function is as follows. Catalytic subunit of the DNA primase complex and component of the DNA polymerase alpha complex (also known as the alpha DNA polymerase-primase complex) which play an essential role in the initiation of DNA synthesis. During the S phase of the cell cycle, the DNA polymerase alpha complex (composed of a catalytic subunit PolA1, an accessory subunit PolA2 and two primase subunits, the catalytic subunit Prim1 and the regulatory subunit Prim2) is recruited to DNA at the replicative forks. The primase subunit of the polymerase alpha complex initiates DNA synthesis by oligomerising short RNA primers on both leading and lagging strands. These primers are initially extended by the polymerase alpha catalytic subunit and subsequently transferred to polymerase delta and polymerase epsilon for processive synthesis on the lagging and leading strand, respectively. In the primase complex, both subunits are necessary for the initial di-nucleotide formation, but the extension of the primer depends only on the catalytic subunit. Can add both ribo- and deoxynucleotides during elongation of the primers. Binds single stranded DNA. In Drosophila melanogaster (Fruit fly), this protein is DNA primase small subunit.